The following is a 340-amino-acid chain: Adenosine kinase (340 aa).

D293 is an active-site residue.

The protein belongs to the carbohydrate kinase PfkB family. The cofactor is Mg(2+).

The enzyme catalyses adenosine + ATP = AMP + ADP + H(+). The protein operates within purine metabolism; AMP biosynthesis via salvage pathway; AMP from adenosine: step 1/1. In terms of biological role, ATP dependent phosphorylation of adenosine and other related nucleoside analogs to monophosphate derivatives. ADO1 does not play a major role in adenine utilization in yeast. Its physiological role could primarily be to recycle adenosine produced by the methyl cycle. The sequence is that of Adenosine kinase from Saccharomyces cerevisiae (strain ATCC 204508 / S288c) (Baker's yeast).